Reading from the N-terminus, the 69-residue chain is Iota-conotoxin LtIIIA (69 aa).

The N-terminal stretch at Met1–Leu20 is a signal peptide. A propeptide spanning residues Glu21–Arg52 is cleaved from the precursor. 4-carboxyglutamate is present on residues Glu54 and Glu57. Disulfide bonds link Cys55–Cys67, Cys56–Cys65, and Cys61–Cys68. 4-hydroxyproline is present on Pro58.

In terms of tissue distribution, expressed by the venom duct.

It is found in the secreted. In terms of biological role, iota-conotoxins bind to voltage-gated sodium channels and act as agonists by shifting the voltage-dependence of activation to more hyperpolarized levels. This toxin enhances tetrodotoxin-sensitive sodium current in rat dorsal root ganglion neurons. This is Iota-conotoxin LtIIIA from Conus litteratus (Lettered cone).